The sequence spans 101 residues: Putative defensin-like protein 307 (101 aa).

An N-terminal signal peptide occupies residues 1–22; that stretch reads MEKSALIFIGILLFSTCTSIMA. 3 cysteine pairs are disulfide-bonded: C29–C49, C35–C54, and C40–C56.

This sequence belongs to the DEFL family.

It is found in the secreted. The chain is Putative defensin-like protein 307 from Arabidopsis thaliana (Mouse-ear cress).